Here is a 413-residue protein sequence, read N- to C-terminus: Serine hydroxymethyltransferase (413 aa).

Residues L118 and G122–L124 each bind (6S)-5,6,7,8-tetrahydrofolate. N6-(pyridoxal phosphate)lysine is present on K228.

Belongs to the SHMT family. As to quaternary structure, homodimer. It depends on pyridoxal 5'-phosphate as a cofactor.

The protein localises to the cytoplasm. The catalysed reaction is (6R)-5,10-methylene-5,6,7,8-tetrahydrofolate + glycine + H2O = (6S)-5,6,7,8-tetrahydrofolate + L-serine. The protein operates within one-carbon metabolism; tetrahydrofolate interconversion. It functions in the pathway amino-acid biosynthesis; glycine biosynthesis; glycine from L-serine: step 1/1. Its function is as follows. Catalyzes the reversible interconversion of serine and glycine with tetrahydrofolate (THF) serving as the one-carbon carrier. This reaction serves as the major source of one-carbon groups required for the biosynthesis of purines, thymidylate, methionine, and other important biomolecules. Also exhibits THF-independent aldolase activity toward beta-hydroxyamino acids, producing glycine and aldehydes, via a retro-aldol mechanism. The protein is Serine hydroxymethyltransferase of Phytoplasma australiense.